A 447-amino-acid polypeptide reads, in one-letter code: 2-oxoadipate dioxygenase/decarboxylase (447 aa).

3 residues coordinate 2-oxoadipate: H68, R72, and H224. H68 serves as a coordination point for Fe(2+). Residues H224 and E290 each coordinate Fe(2+). V391 serves as a coordination point for 2-oxoadipate.

Belongs to the 2-oxoadipate dioxygenase/decarboxylase family. Requires Fe(2+) as cofactor.

The catalysed reaction is 2-oxoadipate + O2 = (R)-2-hydroxyglutarate + CO2. Its function is as follows. Catalyzes the decarboxylation and hydroxylation of 2-oxoadipate (2OA) to form D-2-hydroxyglutarate (D-2-HGA). The polypeptide is 2-oxoadipate dioxygenase/decarboxylase (ydcJ) (Escherichia coli (strain K12)).